We begin with the raw amino-acid sequence, 183 residues long: Adenine phosphoribosyltransferase (183 aa).

It belongs to the purine/pyrimidine phosphoribosyltransferase family. Homodimer.

The protein resides in the cytoplasm. The catalysed reaction is AMP + diphosphate = 5-phospho-alpha-D-ribose 1-diphosphate + adenine. It functions in the pathway purine metabolism; AMP biosynthesis via salvage pathway; AMP from adenine: step 1/1. Functionally, catalyzes a salvage reaction resulting in the formation of AMP, that is energically less costly than de novo synthesis. The polypeptide is Adenine phosphoribosyltransferase (Salmonella paratyphi C (strain RKS4594)).